Consider the following 482-residue polypeptide: Methylenetetrahydrofolate--tRNA-(uracil-5-)-methyltransferase TrmFO (482 aa).

20-25 (GGGLAG) lines the FAD pocket.

The protein belongs to the MnmG family. TrmFO subfamily. FAD is required as a cofactor.

The protein localises to the cytoplasm. It catalyses the reaction uridine(54) in tRNA + (6R)-5,10-methylene-5,6,7,8-tetrahydrofolate + NADH + H(+) = 5-methyluridine(54) in tRNA + (6S)-5,6,7,8-tetrahydrofolate + NAD(+). It carries out the reaction uridine(54) in tRNA + (6R)-5,10-methylene-5,6,7,8-tetrahydrofolate + NADPH + H(+) = 5-methyluridine(54) in tRNA + (6S)-5,6,7,8-tetrahydrofolate + NADP(+). In terms of biological role, catalyzes the folate-dependent formation of 5-methyl-uridine at position 54 (M-5-U54) in all tRNAs. The chain is Methylenetetrahydrofolate--tRNA-(uracil-5-)-methyltransferase TrmFO from Rhodopseudomonas palustris (strain HaA2).